Here is a 194-residue protein sequence, read N- to C-terminus: MWLSPSLLLLILPGYSIAAKITGPTTVNGSEQGSLTVQCAYGSGWETYLKWRCQGADWNYCNILVKTNGSEQEVKKNRVSIRDNQKNHVFTVTMENLKRDDADSYWCGTERPGIDLGVKVQVTINPGTQTAVSEWTTTTASLAFTAAATQKTSSPLTRSPLKSTHFLFLFLLELPLLLSMLGTVLWVNRPQRRS.

Positions 1–18 (MWLSPSLLLLILPGYSIA) are cleaved as a signal peptide. An Ig-like V-type domain is found at 19-125 (AKITGPTTVN…LGVKVQVTIN (107 aa)). The Extracellular portion of the chain corresponds to 19-165 (AKITGPTTVN…LTRSPLKSTH (147 aa)). A glycan (N-linked (GlcNAc...) asparagine) is linked at N28. C39 and C107 are joined by a disulfide. The helical transmembrane segment at 166–186 (FLFLFLLELPLLLSMLGTVLW) threads the bilayer. The Cytoplasmic portion of the chain corresponds to 187 to 194 (VNRPQRRS).

This sequence belongs to the CD300 family. Forms complexes with the CD300 family members with exception of CD300c. N-glycosylated. In terms of tissue distribution, expression seems restricted to cells of myeloid lineage.

The protein localises to the cell membrane. This chain is CMRF35-like molecule 5 (CD300LD), found in Homo sapiens (Human).